The chain runs to 245 residues: Ubiquinone/menaquinone biosynthesis C-methyltransferase UbiE (245 aa).

Residues threonine 71, aspartate 92, and 118–119 (DA) each bind S-adenosyl-L-methionine.

This sequence belongs to the class I-like SAM-binding methyltransferase superfamily. MenG/UbiE family.

The catalysed reaction is a 2-demethylmenaquinol + S-adenosyl-L-methionine = a menaquinol + S-adenosyl-L-homocysteine + H(+). The enzyme catalyses a 2-methoxy-6-(all-trans-polyprenyl)benzene-1,4-diol + S-adenosyl-L-methionine = a 5-methoxy-2-methyl-3-(all-trans-polyprenyl)benzene-1,4-diol + S-adenosyl-L-homocysteine + H(+). Its pathway is quinol/quinone metabolism; menaquinone biosynthesis; menaquinol from 1,4-dihydroxy-2-naphthoate: step 2/2. It participates in cofactor biosynthesis; ubiquinone biosynthesis. Its function is as follows. Methyltransferase required for the conversion of demethylmenaquinol (DMKH2) to menaquinol (MKH2) and the conversion of 2-polyprenyl-6-methoxy-1,4-benzoquinol (DDMQH2) to 2-polyprenyl-3-methyl-6-methoxy-1,4-benzoquinol (DMQH2). The protein is Ubiquinone/menaquinone biosynthesis C-methyltransferase UbiE of Neisseria meningitidis serogroup A / serotype 4A (strain DSM 15465 / Z2491).